The chain runs to 190 residues: Dynein axonemal light chain 1 (190 aa).

Ala2 bears the N-acetylalanine mark. LRR repeat units lie at residues 47–69 (LANC…LNGL), 70–93 (KNLR…AVGD), 95–114 (LEEL…IHVM), and 115–138 (RKLK…KLAE). Ser56 is modified (phosphoserine).

This sequence belongs to the dynein light chain LC1-type family. Interacts with ZMYND10 (via C-terminus). Interacts with DNAH5, a outer arm dynein heavy chain. Interacts with tubulin located within the A-tubule of the outer doublets in a ATP-independent manner.

The protein resides in the cytoplasm. The protein localises to the cytoskeleton. It is found in the cilium axoneme. Its function is as follows. Part of the multisubunit axonemal ATPase complexes that generate the force for cilia motility and govern beat frequency. Component of the outer arm dynein (ODA). May be involved in a mechanosensory feedback mechanism controlling ODA activity based on external conformational cues by tethering the outer arm dynein heavy chain (DNAH5) to the microtubule within the axoneme. Important for ciliary function in the airways and for the function of the cilia that produce the nodal flow essential for the determination of the left-right asymmetry. The sequence is that of Dynein axonemal light chain 1 from Rattus norvegicus (Rat).